The primary structure comprises 509 residues: Putative thymidine phosphorylase (509 aa).

Belongs to the thymidine/pyrimidine-nucleoside phosphorylase family. Type 2 subfamily.

It carries out the reaction thymidine + phosphate = 2-deoxy-alpha-D-ribose 1-phosphate + thymine. This Chelativorans sp. (strain BNC1) protein is Putative thymidine phosphorylase.